The sequence spans 140 residues: Nucleoside diphosphate kinase (140 aa).

ATP-binding residues include K11, F59, R87, T93, R104, and N114. H117 functions as the Pros-phosphohistidine intermediate in the catalytic mechanism.

The protein belongs to the NDK family. Homotetramer. It depends on Mg(2+) as a cofactor.

The protein localises to the cytoplasm. It carries out the reaction a 2'-deoxyribonucleoside 5'-diphosphate + ATP = a 2'-deoxyribonucleoside 5'-triphosphate + ADP. It catalyses the reaction a ribonucleoside 5'-diphosphate + ATP = a ribonucleoside 5'-triphosphate + ADP. In terms of biological role, major role in the synthesis of nucleoside triphosphates other than ATP. The ATP gamma phosphate is transferred to the NDP beta phosphate via a ping-pong mechanism, using a phosphorylated active-site intermediate. The chain is Nucleoside diphosphate kinase from Francisella tularensis subsp. mediasiatica (strain FSC147).